We begin with the raw amino-acid sequence, 529 residues long: BTB/POZ domain-containing protein 6 (529 aa).

In terms of domain architecture, BTB spans 127-197; that stretch reads ADVHFIVGPA…LYSDEIDLEA (71 aa).

Homodimer and heterodimer. Interacts with cul3 via the BTB domain.

Its subcellular location is the cytoplasm. Its function is as follows. Adapter protein for the cul3 E3 ubiquitin-protein ligase complex. Involved in late neuronal development and muscle formation. This is BTB/POZ domain-containing protein 6 (btbd6) from Xenopus laevis (African clawed frog).